A 1943-amino-acid chain; its full sequence is Trichohyalin (1943 aa).

The tract at residues 1–91 is S-100-like; that stretch reads MSPLLRSICD…AQACYYALGQ (91 aa). EF-hand domains lie at 23 to 48 and 49 to 84; these read CDGAALTKKDLKNLLEREFGAVLRRP and HDPKTVDLILELLDLDSNGRVDFNEFLLFIFKVAQA. The Ca(2+) site is built by aspartate 32, aspartate 62, aspartate 64, asparagine 66, arginine 68, and glutamate 73. Disordered regions lie at residues 110 to 164, 186 to 209, and 222 to 274; these read LQDR…LEQR, RRAEEEQLQSCKGHETEEFPDEEQ, and GREE…LQEE. A compositionally biased stretch (basic and acidic residues) spans 197–209; it reads KGHETEEFPDEEQ. A 1-1; approximate repeat occupies 314-326; the sequence is RREQQEERREQQE. The interval 314–377 is 5 X 13 AA tandem repeats of R-R-E-Q-E-E-E-R-R-E-Q-Q-L; the sequence is RREQQEERRE…QEEERREQQL (64 aa). The 1-2; approximate repeat unit spans residues 327–339; it reads RREQQEERREQQL. The stretch at 340 to 351 is one 1-3; approximate repeat; it reads RREQEERREQQL. 10 consecutive repeat copies span residues 352–364, 365–377, 378–383, 384–389, 390–395, 396–401, 402–407, 408–413, 414–419, and 420–425. Residues 378 to 425 form an 8 X 6 AA tandem repeats of R-R-E-Q-Q-L region; the sequence is RREQQLRREQQLRREQQLRREQQLRREQQLRREQQLRREQQLRREQQL. The 9 X 28 AA approximate tandem repeats stretch occupies residues 425 to 683; the sequence is LRREQEEERH…REHEEERREQ (259 aa). 4 disordered regions span residues 426 to 485, 509 to 546, 608 to 819, and 837 to 872; these read RREQ…EERR, REQEERREQRLKRQEEEERLQQRLRSEQQLRREQEERR, ERLE…EKEQ, and EEQLQRRERAQQLQEEEDGLQEDQERRRSQEQRRDQ. Basic and acidic residues-rich tracts occupy residues 608–684, 724–781, 789–812, and 859–872; these read ERLE…REQE, RKQE…ERGR, PLREQRERQLRAEERQQREQRFLP, and DQERRRSQEQRRDQ. Tandem repeats lie at residues 906 to 935, 936 to 965, 966 to 995, 996 to 1025, 1026 to 1055, 1056 to 1085, 1086 to 1115, 1116 to 1145, 1146 to 1175, and 1176 to 1204. Positions 906–1204 are 10 X 30 AA tandem repeats; that stretch reads LQEEEEELQR…RERQYREEEE (299 aa). Positions 950–992 are enriched in basic and acidic residues; that stretch reads KRRRQERERQYRKDKKLQQKEEQLLGEEPEKRRRQEREKKYRE. 9 disordered regions span residues 950-1000, 1046-1120, 1137-1162, 1193-1371, 1404-1435, 1492-1691, 1757-1820, 1834-1864, and 1876-1928; these read KRRR…QQEE, RERQ…QQEE, ERQYREEEEVQQEEEQLLREEPEKRR, QERE…RHQE, REQQLRQDRDRKFREEEQQLSRQERDRKFREE, QQLR…ERDR, PERE…RDGK, EQRLRQERDRQYRAEEQFATQEKSRREEQEL, and RERK…VRSS. Over residues 1052–1064 the composition is skewed to acidic residues; the sequence is EEEELQQEEEQLL. Basic and acidic residues-rich tracts occupy residues 1065–1085 and 1092–1111; these read GEERETRRRQELERQYRKEEE and QLLREEPEKRRRQERERQCR. The span at 1142–1151 shows a compositional bias: acidic residues; the sequence is EEEEVQQEEE. Residues 1152-1162 are compositionally biased toward basic and acidic residues; that stretch reads QLLREEPEKRR. Basic and acidic residues-rich tracts occupy residues 1214 to 1263 and 1274 to 1371; these read YRDE…DRQS and QQER…RHQE. Residues 1292 to 1894 are 23 X 26 AA approximate tandem repeats; it reads HFPEEEQLER…IRRQQKEEQR (603 aa). Composition is skewed to basic and acidic residues over residues 1492 to 1524, 1533 to 1673, and 1682 to 1691; these read QQLRRQERDRKFREQELRSQEPERKFLEEEQQL, FLQE…REEE, and QQLRRQERDR. Residues 1876–1912 show a composition bias toward basic and acidic residues; it reads RERKLREEHIRRQQKEEQRHRQVGEIKSQEGKGHGRL.

It belongs to the S100-fused protein family. In terms of assembly, monomer. Post-translationally, substrate of transglutaminase. Some 200 arginines are probably converted to citrullines by peptidylarginine deimidase. Found in the hard keratinizing tissues such as the inner root sheath (IRS) of hair follicles and medulla, and in the filiform papillae of dorsal tongue epithelium.

Its function is as follows. Intermediate filament-associated protein that associates in regular arrays with keratin intermediate filaments (KIF) of the inner root sheath cells of the hair follicle and the granular layer of the epidermis. It later becomes cross-linked to KIF by isodipeptide bonds. It may serve as scaffold protein, together with involucrin, in the organization of the cell envelope or even anchor the cell envelope to the KIF network. It may be involved in its own calcium-dependent postsynthetic processing during terminal differentiation. This is Trichohyalin (TCHH) from Homo sapiens (Human).